The following is a 163-amino-acid chain: Peptide deformylase 3 (163 aa).

2 residues coordinate Fe cation: Cys91 and His133. The active site involves Glu134. His137 lines the Fe cation pocket.

Belongs to the polypeptide deformylase family. The cofactor is Fe(2+).

It carries out the reaction N-terminal N-formyl-L-methionyl-[peptide] + H2O = N-terminal L-methionyl-[peptide] + formate. Its function is as follows. Removes the formyl group from the N-terminal Met of newly synthesized proteins. Requires at least a dipeptide for an efficient rate of reaction. N-terminal L-methionine is a prerequisite for activity but the enzyme has broad specificity at other positions. This Shewanella oneidensis (strain ATCC 700550 / JCM 31522 / CIP 106686 / LMG 19005 / NCIMB 14063 / MR-1) protein is Peptide deformylase 3.